The following is an 853-amino-acid chain: Stachyose synthase (853 aa).

The propeptide occupies 1–11 (MAPPLNSTTSN).

The protein belongs to the glycosyl hydrolases 36 family.

It is found in the cytoplasm. It carries out the reaction alpha-D-galactosyl-(1-&gt;3)-1D-myo-inositol + raffinose = stachyose + myo-inositol. The protein operates within glycan metabolism; stachyose biosynthesis; stachyose from raffinose: step 1/1. In terms of biological role, catalyzes stachyose synthesis by transfer of a galactosyl moiety from galactinol to raffinose. Also catalyzes verbascose synthesis by galactosyl transfer from galactinol to stachyose or from one stachyose molecule to another. Oligosaccharides of the raffinose family play a protective role in maturation drying of seeds. They may act as cryoprotectants in frost-hardy plants. This Pisum sativum (Garden pea) protein is Stachyose synthase (STS1).